Here is a 327-residue protein sequence, read N- to C-terminus: Phenylalanine--tRNA ligase alpha subunit (327 aa).

Residue glutamate 252 participates in Mg(2+) binding.

It belongs to the class-II aminoacyl-tRNA synthetase family. Phe-tRNA synthetase alpha subunit type 1 subfamily. As to quaternary structure, tetramer of two alpha and two beta subunits. The cofactor is Mg(2+).

It is found in the cytoplasm. The catalysed reaction is tRNA(Phe) + L-phenylalanine + ATP = L-phenylalanyl-tRNA(Phe) + AMP + diphosphate + H(+). The protein is Phenylalanine--tRNA ligase alpha subunit of Yersinia pseudotuberculosis serotype O:1b (strain IP 31758).